The following is a 216-amino-acid chain: NADH-quinone oxidoreductase subunit C (216 aa).

Belongs to the complex I 30 kDa subunit family. As to quaternary structure, NDH-1 is composed of 14 different subunits. Subunits NuoB, C, D, E, F, and G constitute the peripheral sector of the complex.

The protein localises to the cell inner membrane. The enzyme catalyses a quinone + NADH + 5 H(+)(in) = a quinol + NAD(+) + 4 H(+)(out). Functionally, NDH-1 shuttles electrons from NADH, via FMN and iron-sulfur (Fe-S) centers, to quinones in the respiratory chain. The immediate electron acceptor for the enzyme in this species is believed to be ubiquinone. Couples the redox reaction to proton translocation (for every two electrons transferred, four hydrogen ions are translocated across the cytoplasmic membrane), and thus conserves the redox energy in a proton gradient. The sequence is that of NADH-quinone oxidoreductase subunit C from Francisella tularensis subsp. holarctica (strain OSU18).